Consider the following 248-residue polypeptide: Triosephosphate isomerase (248 aa).

Substrate contacts are provided by Asn-10 and Lys-12. His-95 (electrophile) is an active-site residue. Catalysis depends on Glu-165, which acts as the Proton acceptor.

Belongs to the triosephosphate isomerase family. In terms of assembly, homodimer.

It catalyses the reaction D-glyceraldehyde 3-phosphate = dihydroxyacetone phosphate. It participates in carbohydrate biosynthesis; gluconeogenesis. Its pathway is carbohydrate degradation; glycolysis; D-glyceraldehyde 3-phosphate from glycerone phosphate: step 1/1. The sequence is that of Triosephosphate isomerase (TPI1) from Kluyveromyces marxianus (Yeast).